The chain runs to 680 residues: Enzymatic polyprotein (680 aa).

The protease stretch occupies residues 41 to 131 (LHCFVDTGAS…LYEPFIQFTD (91 aa)). Residue Asp-46 is part of the active site. In terms of domain architecture, Reverse transcriptase spans 273 to 453 (LKVIKPSKSP…KKINFLGLEI (181 aa)).

The protein belongs to the caulimoviridae enzymatic polyprotein family.

It catalyses the reaction DNA(n) + a 2'-deoxyribonucleoside 5'-triphosphate = DNA(n+1) + diphosphate. In terms of biological role, encodes for at least two polypeptides: protease (PR) and reverse transcriptase (RT). The protease processes the polyprotein in cis. Reverse transcriptase is multifunctional enzyme that converts the viral RNA genome into dsDNA in viral cytoplasmic capsids. This enzyme displays a DNA polymerase activity that can copy either DNA or RNA templates, and a ribonuclease H (RNase H) activity that cleaves the RNA strand of RNA-DNA heteroduplexes in a partially processive 3'- to 5'-endonucleasic mode. Neo-synthesized pregenomic RNA (pgRNA) are encapsidated, and reverse-transcribed inside the nucleocapsid. Partial (+)DNA is synthesized from the (-)DNA template and generates the relaxed circular DNA (RC-DNA) genome. After budding and infection, the RC-DNA migrates in the nucleus, and is converted into a plasmid-like covalently closed circular DNA (cccDNA). The sequence is that of Enzymatic polyprotein from Cauliflower mosaic virus (strain NY8153) (CaMV).